Consider the following 337-residue polypeptide: F420-dependent glucose-6-phosphate dehydrogenase (337 aa).

Asp40 serves as a coordination point for coenzyme F420-(gamma-Glu)n. The active-site Proton donor is the His41. Coenzyme F420-(gamma-Glu)n-binding positions include Thr77 and 108–109 (SG). The Proton acceptor role is filled by Glu110. Coenzyme F420-(gamma-Glu)n contacts are provided by residues Asn113, 178 to 179 (GG), and 181 to 182 (VV). Thr196, Lys199, Lys260, and Arg284 together coordinate substrate.

It belongs to the F420-dependent glucose-6-phosphate dehydrogenase family. Homodimer.

It catalyses the reaction oxidized coenzyme F420-(gamma-L-Glu)(n) + D-glucose 6-phosphate + H(+) = 6-phospho-D-glucono-1,5-lactone + reduced coenzyme F420-(gamma-L-Glu)(n). Functionally, catalyzes the coenzyme F420-dependent oxidation of glucose 6-phosphate (G6P) to 6-phosphogluconolactone. The polypeptide is F420-dependent glucose-6-phosphate dehydrogenase (Rhodococcus erythropolis (strain PR4 / NBRC 100887)).